A 329-amino-acid chain; its full sequence is DNA-directed RNA polymerase subunit alpha (329 aa).

The alpha N-terminal domain (alpha-NTD) stretch occupies residues 1-231 (MQNSLLKPKA…EQLAVFAQLE (231 aa)). The segment at 249 to 329 (FDPILLRPVD…SWPPAALEKR (81 aa)) is alpha C-terminal domain (alpha-CTD).

This sequence belongs to the RNA polymerase alpha chain family. In terms of assembly, homodimer. The RNAP catalytic core consists of 2 alpha, 1 beta, 1 beta' and 1 omega subunit. When a sigma factor is associated with the core the holoenzyme is formed, which can initiate transcription.

The catalysed reaction is RNA(n) + a ribonucleoside 5'-triphosphate = RNA(n+1) + diphosphate. In terms of biological role, DNA-dependent RNA polymerase catalyzes the transcription of DNA into RNA using the four ribonucleoside triphosphates as substrates. In Albidiferax ferrireducens (strain ATCC BAA-621 / DSM 15236 / T118) (Rhodoferax ferrireducens), this protein is DNA-directed RNA polymerase subunit alpha.